A 236-amino-acid chain; its full sequence is Cell division protein FtsQ (236 aa).

Topologically, residues 1 to 14 (MWDNHQALNQVADW) are cytoplasmic. The chain crosses the membrane as a helical span at residues 15-37 (LFTLAGLTTIYLMVQWTIHLPLL). Residues 37 to 111 (LPLKEVHIRS…NGLDVVVEEH (75 aa)) enclose the POTRA domain. Residues 38–236 (PLKEVHIRSN…VSGFAARGTR (199 aa)) are Periplasmic-facing.

Belongs to the FtsQ/DivIB family. FtsQ subfamily. As to quaternary structure, part of a complex composed of FtsB, FtsL and FtsQ.

The protein localises to the cell inner membrane. In terms of biological role, essential cell division protein. May link together the upstream cell division proteins, which are predominantly cytoplasmic, with the downstream cell division proteins, which are predominantly periplasmic. May control correct divisome assembly. This is Cell division protein FtsQ from Nitrosospira multiformis (strain ATCC 25196 / NCIMB 11849 / C 71).